We begin with the raw amino-acid sequence, 312 residues long: DNA-directed RNA polymerase subunit alpha (312 aa).

Residues 1-226 (MIEFEKPIIT…EHLNLFTDLT (226 aa)) form an alpha N-terminal domain (alpha-NTD) region. The alpha C-terminal domain (alpha-CTD) stretch occupies residues 243 to 312 (DEKVLDRTIE…DLGLGLKNDK (70 aa)).

It belongs to the RNA polymerase alpha chain family. As to quaternary structure, homodimer. The RNAP catalytic core consists of 2 alpha, 1 beta, 1 beta' and 1 omega subunit. When a sigma factor is associated with the core the holoenzyme is formed, which can initiate transcription.

The catalysed reaction is RNA(n) + a ribonucleoside 5'-triphosphate = RNA(n+1) + diphosphate. In terms of biological role, DNA-dependent RNA polymerase catalyzes the transcription of DNA into RNA using the four ribonucleoside triphosphates as substrates. The sequence is that of DNA-directed RNA polymerase subunit alpha from Streptococcus pyogenes serotype M1.